The following is a 158-amino-acid chain: Phosphopantetheine adenylyltransferase (158 aa).

Belongs to the eukaryotic CoaD family.

The protein localises to the cytoplasm. The enzyme catalyses (R)-4'-phosphopantetheine + ATP + H(+) = 3'-dephospho-CoA + diphosphate. It participates in cofactor biosynthesis; coenzyme A biosynthesis. Functionally, reversibly transfers an adenylyl group from ATP to 4'-phosphopantetheine, yielding dephospho-CoA (dPCoA) and pyrophosphate. This chain is Phosphopantetheine adenylyltransferase, found in Pyrococcus horikoshii (strain ATCC 700860 / DSM 12428 / JCM 9974 / NBRC 100139 / OT-3).